A 712-amino-acid polypeptide reads, in one-letter code: Exocyst complex component EXO70I (712 aa).

An N-terminal signal peptide occupies residues 1 to 18; it reads MHKKQLMALLMVPQTSDS. Residues 26 to 53 adopt a coiled-coil conformation; it reads LESAYSDLESLLRSSKQMEQNIETMETR. A glycan (N-linked (GlcNAc...) asparagine) is linked at asparagine 111.

Belongs to the EXO70 family. As to quaternary structure, subunit of the exocyst complex that mediates vesicle tethering during exocytosis. Interacts with VPY at the periarbuscular membrane (PAM) around the arbuscule hyphal tips. Present at low levels in non-mycorrhizal root tips.

The protein localises to the cell membrane. Its function is as follows. Component of an exocyst subcomplex specifically required for periarbuscular membrane (PAM) biogenesis during arbuscular mycorrhizal (AM) symbiosis with AM fungi (e.g. Glomus versiforme), especially critical during the early branching phase of arbuscule development; probably involved in STR and STR2 delivery into the PAM. The chain is Exocyst complex component EXO70I from Medicago truncatula (Barrel medic).